A 228-amino-acid polypeptide reads, in one-letter code: U1 small nuclear ribonucleoprotein C (228 aa).

The Matrin-type zinc finger occupies 4–36 (YYCEYCDIYLTHSSPVGRRQHVQGRKHISAKIE). Basic and acidic residues predominate over residues 179 to 190 (LVKDNPNEERNG). The segment at 179-228 (LVKDNPNEERNGDSAIANQPSTMHHEEDQDDPANATGGTANNNDNVSINA) is disordered. Low complexity predominate over residues 211 to 221 (ANATGGTANNN).

It belongs to the U1 small nuclear ribonucleoprotein C family. U1 snRNP is composed of the 7 core Sm proteins B/B', D1, D2, D3, E, F and G that assemble in a heptameric protein ring on the Sm site of the small nuclear RNA to form the core snRNP, and at least 3 U1 snRNP-specific proteins U1-70K, U1-A and U1-C. U1-C interacts with U1 snRNA and the 5' splice-site region of the pre-mRNA.

It is found in the nucleus. Component of the spliceosomal U1 snRNP, which is essential for recognition of the pre-mRNA 5' splice-site and the subsequent assembly of the spliceosome. U1-C is directly involved in initial 5' splice-site recognition for both constitutive and regulated alternative splicing. The interaction with the 5' splice-site seems to precede base-pairing between the pre-mRNA and the U1 snRNA. Stimulates commitment or early (E) complex formation by stabilizing the base pairing of the 5' end of the U1 snRNA and the 5' splice-site region. The sequence is that of U1 small nuclear ribonucleoprotein C from Plasmodium knowlesi (strain H).